The sequence spans 179 residues: Large ribosomal subunit protein uL5 (179 aa).

The protein belongs to the universal ribosomal protein uL5 family. As to quaternary structure, part of the 50S ribosomal subunit; part of the 5S rRNA/L5/L18/L25 subcomplex. Contacts the 5S rRNA and the P site tRNA. Forms a bridge to the 30S subunit in the 70S ribosome.

In terms of biological role, this is one of the proteins that bind and probably mediate the attachment of the 5S RNA into the large ribosomal subunit, where it forms part of the central protuberance. In the 70S ribosome it contacts protein S13 of the 30S subunit (bridge B1b), connecting the 2 subunits; this bridge is implicated in subunit movement. Contacts the P site tRNA; the 5S rRNA and some of its associated proteins might help stabilize positioning of ribosome-bound tRNAs. This Neisseria meningitidis serogroup C (strain 053442) protein is Large ribosomal subunit protein uL5.